The chain runs to 284 residues: Putative ribosome biogenesis protein C306.07c (284 aa).

A disordered region spans residues Leu264–Lys284.

The protein belongs to the universal ribosomal protein uL1 family. Highly divergent. As to quaternary structure, component of the 90S pre-ribosomes.

The protein localises to the nucleus. It localises to the nucleolus. Functionally, involved in rRNA-processing and ribosome biosynthesis. The chain is Putative ribosome biogenesis protein C306.07c from Schizosaccharomyces pombe (strain 972 / ATCC 24843) (Fission yeast).